The sequence spans 194 residues: Thymidine kinase (194 aa).

ATP-binding positions include 9 to 16 and 85 to 88; these read GAMNSGKT and DECQ. Glu86 acts as the Proton acceptor in catalysis. Zn(2+)-binding residues include Cys143, Cys146, Cys180, and His183.

This sequence belongs to the thymidine kinase family. As to quaternary structure, homotetramer.

The protein resides in the cytoplasm. It catalyses the reaction thymidine + ATP = dTMP + ADP + H(+). This Enterococcus faecalis (strain ATCC 700802 / V583) protein is Thymidine kinase.